Consider the following 157-residue polypeptide: Small ribosomal subunit protein uS7 (157 aa).

This sequence belongs to the universal ribosomal protein uS7 family. Part of the 30S ribosomal subunit. Contacts proteins S9 and S11.

In terms of biological role, one of the primary rRNA binding proteins, it binds directly to 16S rRNA where it nucleates assembly of the head domain of the 30S subunit. Is located at the subunit interface close to the decoding center, probably blocks exit of the E-site tRNA. The chain is Small ribosomal subunit protein uS7 from Herpetosiphon aurantiacus (strain ATCC 23779 / DSM 785 / 114-95).